Here is a 229-residue protein sequence, read N- to C-terminus: Probable methylthioribulose-1-phosphate dehydratase (229 aa).

C97 lines the substrate pocket. Zn(2+) contacts are provided by H115 and H117. E139 serves as the catalytic Proton donor/acceptor. H195 lines the Zn(2+) pocket.

This sequence belongs to the aldolase class II family. MtnB subfamily. Zn(2+) serves as cofactor.

It localises to the cytoplasm. The catalysed reaction is 5-(methylsulfanyl)-D-ribulose 1-phosphate = 5-methylsulfanyl-2,3-dioxopentyl phosphate + H2O. It participates in amino-acid biosynthesis; L-methionine biosynthesis via salvage pathway; L-methionine from S-methyl-5-thio-alpha-D-ribose 1-phosphate: step 2/6. In terms of biological role, catalyzes the dehydration of methylthioribulose-1-phosphate (MTRu-1-P) into 2,3-diketo-5-methylthiopentyl-1-phosphate (DK-MTP-1-P). The protein is Probable methylthioribulose-1-phosphate dehydratase of Acyrthosiphon pisum (Pea aphid).